Consider the following 196-residue polypeptide: Probable malonic semialdehyde reductase RutE (196 aa).

This sequence belongs to the nitroreductase family. HadB/RutE subfamily. The cofactor is FMN.

The enzyme catalyses 3-hydroxypropanoate + NADP(+) = 3-oxopropanoate + NADPH + H(+). May reduce toxic product malonic semialdehyde to 3-hydroxypropionic acid, which is excreted. The sequence is that of Probable malonic semialdehyde reductase RutE from Escherichia coli (strain K12 / MC4100 / BW2952).